A 224-amino-acid chain; its full sequence is MVEVRYLGHSAVLLTDGKTRIVIDPFLTGNPMAALGVGEVQADLILVTHAHGDHFGDSVALSKKGGVVVSTFEIATYAEKHGAKSVPMNLGGTYRFEGGWLKWVPAWHSSSFPDGTYGGMPMGVVVELGGKRIYHAGDTALFSDMRLIGEMGLDLALLPIGDHFTMGPEDALKALELLRPKKVVPIHYNTFPPIRQDGEAFAQRAREKGVEGHALKPGEVLRLD.

Belongs to the UPF0173 family.

This chain is UPF0173 metal-dependent hydrolase TTHA1283, found in Thermus thermophilus (strain ATCC 27634 / DSM 579 / HB8).